Consider the following 315-residue polypeptide: MKRVVIALGGNAILQRGQKGTYEEQMENVRRTAKQIADIILDGDYEVVITHGNGPQVGALLLHMDAGQQVYGIPAQPMDVAGAMTQGQIGYMIGQALINELRKRGVEKPVATIVTQTIVDKNDPAFQNPSKPVGPFYDEETAKKLAKEKGWTVIEDAGRGWRRVVPSPDPKGHVEAPVIVDLVEKGFIVIASGGGGVPVIEENGELKGVEAVIDKDLAGEKLAEEVKADIFMILTDVNGAAINYGKPDEKWLGKVTVDELKRYYKEGHFKKGSMGPKVLAAIRFVEWGGERAVIASLDRAVEALEGKTGTQVVRE.

Belongs to the carbamate kinase family. In terms of assembly, homodimer.

It is found in the cytoplasm. It carries out the reaction hydrogencarbonate + NH4(+) + ATP = carbamoyl phosphate + ADP + H2O + H(+). This Thermococcus kodakarensis (strain ATCC BAA-918 / JCM 12380 / KOD1) (Pyrococcus kodakaraensis (strain KOD1)) protein is Carbamate kinase (cpkA).